Here is a 253-residue protein sequence, read N- to C-terminus: Testis-expressed protein 47 (253 aa).

This Mus musculus (Mouse) protein is Testis-expressed protein 47 (Tex47).